A 165-amino-acid polypeptide reads, in one-letter code: Small ribosomal subunit protein uS5 (165 aa).

One can recognise an S5 DRBM domain in the interval 13–76 (LEEKVLVVNR…EAARKNLITI (64 aa)).

The protein belongs to the universal ribosomal protein uS5 family. As to quaternary structure, part of the 30S ribosomal subunit. Contacts proteins S4 and S8.

Its function is as follows. With S4 and S12 plays an important role in translational accuracy. Located at the back of the 30S subunit body where it stabilizes the conformation of the head with respect to the body. This chain is Small ribosomal subunit protein uS5, found in Chlamydia abortus (strain DSM 27085 / S26/3) (Chlamydophila abortus).